Reading from the N-terminus, the 63-residue chain is DNA-directed RNA polymerases I, II, and III subunit RPABC4 (63 aa).

Cys-24, Cys-27, Cys-41, and Cys-44 together coordinate Zn(2+). Residues Cys-24 to Cys-44 form a C4-type zinc finger.

This sequence belongs to the archaeal Rpo12/eukaryotic RPC10 RNA polymerase subunit family. Component of the RNA polymerase I (Pol I), RNA polymerase II (Pol II) and RNA polymerase III (Pol III) complexes consisting of 14, 12 and 17 subunits, respectively.

The protein localises to the nucleus. Functionally, DNA-dependent RNA polymerase catalyzes the transcription of DNA into RNA using the four ribonucleoside triphosphates as substrates. Common component of RNA polymerases I, II and III which synthesize ribosomal RNA precursors, mRNA precursors and many functional non-coding RNAs, and a small RNAs, such as 5S rRNA and tRNAs, respectively. This Schizosaccharomyces pombe (strain 972 / ATCC 24843) (Fission yeast) protein is DNA-directed RNA polymerases I, II, and III subunit RPABC4 (rpc10).